Reading from the N-terminus, the 147-residue chain is Ribosome-binding factor A (147 aa).

The tract at residues 123–147 (LAKLKEGAQPAGDANPYKTSDEEED) is disordered.

Belongs to the RbfA family. In terms of assembly, monomer. Binds 30S ribosomal subunits, but not 50S ribosomal subunits or 70S ribosomes.

The protein resides in the cytoplasm. Functionally, one of several proteins that assist in the late maturation steps of the functional core of the 30S ribosomal subunit. Associates with free 30S ribosomal subunits (but not with 30S subunits that are part of 70S ribosomes or polysomes). Required for efficient processing of 16S rRNA. May interact with the 5'-terminal helix region of 16S rRNA. The sequence is that of Ribosome-binding factor A from Corynebacterium aurimucosum (strain ATCC 700975 / DSM 44827 / CIP 107346 / CN-1) (Corynebacterium nigricans).